A 189-amino-acid polypeptide reads, in one-letter code: Peptidyl-tRNA hydrolase (189 aa).

Y14 contacts tRNA. Residue H19 is the Proton acceptor of the active site. TRNA is bound by residues Y64, N66, and N112.

This sequence belongs to the PTH family. As to quaternary structure, monomer.

The protein resides in the cytoplasm. The enzyme catalyses an N-acyl-L-alpha-aminoacyl-tRNA + H2O = an N-acyl-L-amino acid + a tRNA + H(+). In terms of biological role, hydrolyzes ribosome-free peptidyl-tRNAs (with 1 or more amino acids incorporated), which drop off the ribosome during protein synthesis, or as a result of ribosome stalling. Functionally, catalyzes the release of premature peptidyl moieties from peptidyl-tRNA molecules trapped in stalled 50S ribosomal subunits, and thus maintains levels of free tRNAs and 50S ribosomes. The polypeptide is Peptidyl-tRNA hydrolase (Finegoldia magna (strain ATCC 29328 / DSM 20472 / WAL 2508) (Peptostreptococcus magnus)).